The primary structure comprises 341 residues: Methionine import ATP-binding protein MetN 2 (341 aa).

One can recognise an ABC transporter domain in the interval 2 to 241 (IELKEVVKEY…PQHTVTKRFV (240 aa)). 38-45 (GFSGAGKS) is a binding site for ATP.

The protein belongs to the ABC transporter superfamily. Methionine importer (TC 3.A.1.24) family. As to quaternary structure, the complex is composed of two ATP-binding proteins (MetN), two transmembrane proteins (MetI) and a solute-binding protein (MetQ).

It is found in the cell membrane. The enzyme catalyses L-methionine(out) + ATP + H2O = L-methionine(in) + ADP + phosphate + H(+). It catalyses the reaction D-methionine(out) + ATP + H2O = D-methionine(in) + ADP + phosphate + H(+). Part of the ABC transporter complex MetNIQ involved in methionine import. Responsible for energy coupling to the transport system. The sequence is that of Methionine import ATP-binding protein MetN 2 from Staphylococcus aureus (strain N315).